A 187-amino-acid chain; its full sequence is UPF0301 protein PMI0339 (187 aa).

The protein belongs to the UPF0301 (AlgH) family.

In Proteus mirabilis (strain HI4320), this protein is UPF0301 protein PMI0339.